The sequence spans 113 residues: Dolichyl-diphosphooligosaccharide--protein glycosyltransferase subunit DAD1 (113 aa).

Ser-2 is subject to N-acetylserine. The Cytoplasmic portion of the chain corresponds to 2-30; it reads SASVLSVISRFLEEYLSSTPQRLKLLDAY. Residues 31–51 form a helical membrane-spanning segment; the sequence is LLYILLTGALQFGYCLLVGTF. Position 52 (Pro-52) is a topological domain, lumenal. A helical membrane pass occupies residues 53-73; sequence FNSFLSGFISCVGSFILAVCL. Topologically, residues 74-92 are cytoplasmic; that stretch reads RIQINPQNKADFQGISPER. A helical membrane pass occupies residues 93 to 113; sequence AFADFLFASTILHLVVMNFVG.

The protein belongs to the DAD/OST2 family. Component of the oligosaccharyltransferase (OST) complex. OST exists in two different complex forms which contain common core subunits RPN1, RPN2, OST48, OST4, DAD1 and TMEM258, either STT3A or STT3B as catalytic subunits, and form-specific accessory subunits. STT3A complex assembly occurs through the formation of 3 subcomplexes. Subcomplex 1 contains RPN1 and TMEM258, subcomplex 2 contains the STT3A-specific subunits STT3A, DC2/OSTC, and KCP2 as well as the core subunit OST4, and subcomplex 3 contains RPN2, DAD1, and OST48. The STT3A complex can form stable complexes with the Sec61 complex or with both the Sec61 and TRAP complexes.

It is found in the endoplasmic reticulum membrane. Its pathway is protein modification; protein glycosylation. Functionally, subunit of the oligosaccharyl transferase (OST) complex that catalyzes the initial transfer of a defined glycan (Glc(3)Man(9)GlcNAc(2) in eukaryotes) from the lipid carrier dolichol-pyrophosphate to an asparagine residue within an Asn-X-Ser/Thr consensus motif in nascent polypeptide chains, the first step in protein N-glycosylation. N-glycosylation occurs cotranslationally and the complex associates with the Sec61 complex at the channel-forming translocon complex that mediates protein translocation across the endoplasmic reticulum (ER). All subunits are required for a maximal enzyme activity. This Sus scrofa (Pig) protein is Dolichyl-diphosphooligosaccharide--protein glycosyltransferase subunit DAD1.